Consider the following 179-residue polypeptide: Large ribosomal subunit protein uL10 (179 aa).

Belongs to the universal ribosomal protein uL10 family. In terms of assembly, part of the ribosomal stalk of the 50S ribosomal subunit. The N-terminus interacts with L11 and the large rRNA to form the base of the stalk. The C-terminus forms an elongated spine to which L12 dimers bind in a sequential fashion forming a multimeric L10(L12)X complex.

In terms of biological role, forms part of the ribosomal stalk, playing a central role in the interaction of the ribosome with GTP-bound translation factors. The sequence is that of Large ribosomal subunit protein uL10 from Symbiobacterium thermophilum (strain DSM 24528 / JCM 14929 / IAM 14863 / T).